The following is a 243-amino-acid chain: Lectin-4 (243 aa).

At Gln-1 the chain carries Pyrrolidone carboxylic acid. Asn-5 carries N-linked (GlcNAc...) asparagine; in alpha chain glycosylation. N-linked (GlcNAc...) asparagine glycosylation is present at Asn-18. Glu-129 and Asp-131 together coordinate Mn(2+). Positions 131, 133, 135, and 140 each coordinate Ca(2+). 2 residues coordinate Mn(2+): Asp-140 and His-145.

This sequence belongs to the leguminous lectin family. Homodimer of Alpha and Beta forms. In terms of processing, N-glycosylation of Asn-5 converts form Beta to form Alpha.

Functionally, lectin which has a strong affinity for both the Lewis b and y human blood-group determinants. This chain is Lectin-4, found in Griffonia simplicifolia (Bandeiraea simplicifolia).